The primary structure comprises 457 residues: Siroheme synthase (457 aa).

The tract at residues 1–204 (MDHLPIFCQL…ADEKAVNATT (204 aa)) is precorrin-2 dehydrogenase /sirohydrochlorin ferrochelatase. NAD(+) is bound by residues 22-23 (DV) and 43-44 (LT). A Phosphoserine modification is found at Ser128. The uroporphyrinogen-III C-methyltransferase stretch occupies residues 216 to 457 (GEVVLVGAGP…RDKLNWFSNY (242 aa)). S-adenosyl-L-methionine is bound at residue Pro225. Asp248 functions as the Proton acceptor in the catalytic mechanism. The Proton donor role is filled by Lys270. Residues 301–303 (GGD), Ile306, 331–332 (TA), Met382, and Gly411 each bind S-adenosyl-L-methionine.

In the N-terminal section; belongs to the precorrin-2 dehydrogenase / sirohydrochlorin ferrochelatase family. The protein in the C-terminal section; belongs to the precorrin methyltransferase family.

The catalysed reaction is uroporphyrinogen III + 2 S-adenosyl-L-methionine = precorrin-2 + 2 S-adenosyl-L-homocysteine + H(+). It catalyses the reaction precorrin-2 + NAD(+) = sirohydrochlorin + NADH + 2 H(+). It carries out the reaction siroheme + 2 H(+) = sirohydrochlorin + Fe(2+). Its pathway is cofactor biosynthesis; adenosylcobalamin biosynthesis; precorrin-2 from uroporphyrinogen III: step 1/1. It functions in the pathway cofactor biosynthesis; adenosylcobalamin biosynthesis; sirohydrochlorin from precorrin-2: step 1/1. The protein operates within porphyrin-containing compound metabolism; siroheme biosynthesis; precorrin-2 from uroporphyrinogen III: step 1/1. It participates in porphyrin-containing compound metabolism; siroheme biosynthesis; siroheme from sirohydrochlorin: step 1/1. Its pathway is porphyrin-containing compound metabolism; siroheme biosynthesis; sirohydrochlorin from precorrin-2: step 1/1. Multifunctional enzyme that catalyzes the SAM-dependent methylations of uroporphyrinogen III at position C-2 and C-7 to form precorrin-2 via precorrin-1. Then it catalyzes the NAD-dependent ring dehydrogenation of precorrin-2 to yield sirohydrochlorin. Finally, it catalyzes the ferrochelation of sirohydrochlorin to yield siroheme. The chain is Siroheme synthase from Salmonella choleraesuis (strain SC-B67).